The chain runs to 81 residues: Cortexin-2 (81 aa).

A helical transmembrane segment spans residues Thr-29 to Phe-49.

This sequence belongs to the cortexin family.

It is found in the membrane. The chain is Cortexin-2 (ctxn2) from Danio rerio (Zebrafish).